A 413-amino-acid chain; its full sequence is Lysosomal phospholipase A and acyltransferase (413 aa).

An N-terminal signal peptide occupies residues 1–33 (MDRHLCICREIQLRSGLLFPFLLLMMLADLALP). Aspartate 46 lines the substrate pocket. Cysteine 65 and cysteine 89 are oxidised to a cystine. An N-linked (GlcNAc...) asparagine glycan is attached at asparagine 99. Serine 198 functions as the Acyl-ester intermediate in the catalytic mechanism. Serine 198 is a Zn(2+) binding site. Methionine 199 contributes to the substrate binding site. Residues asparagine 273 and asparagine 289 are each glycosylated (N-linked (GlcNAc...) asparagine). Zn(2+) is bound at residue cysteine 355. Residues aspartate 360 and histidine 392 each act as charge relay system in the active site. Histidine 392 is a binding site for Zn(2+). An N-linked (GlcNAc...) asparagine glycan is attached at asparagine 398.

It belongs to the AB hydrolase superfamily. Lipase family. Post-translationally, N-glycosylated. N-glycosylation is important for maturation of the enzyme and normal subcellular location. Detected in alveolar macrophages (at protein level). Widely expressed. Expressed at highest levels in alveolar macrophages.

It localises to the lysosome. Its subcellular location is the secreted. The protein resides in the membrane. The enzyme catalyses a 1,2-diacyl-sn-glycero-3-phosphocholine + H2O = a 2-acyl-sn-glycero-3-phosphocholine + a fatty acid + H(+). The catalysed reaction is 1,2-dihexadecanoyl-sn-glycero-3-phosphocholine + H2O = 2-hexadecanoyl-sn-glycero-3-phosphocholine + hexadecanoate + H(+). It carries out the reaction 1-hexadecanoyl-2-(9Z-octadecenoyl)-sn-glycero-3-phosphocholine + H2O = 2-(9Z-octadecenoyl)-sn-glycero-3-phosphocholine + hexadecanoate + H(+). It catalyses the reaction 1,2-di-(9Z-octadecenoyl)-sn-glycero-3-phosphocholine + H2O = 2-(9Z-octadecenoyl)-sn-glycero-3-phosphocholine + (9Z)-octadecenoate + H(+). The enzyme catalyses 1-hexadecanoyl-2-glutaroyl-sn-glycero-3-phosphocholine + H2O = 2-glutaroyl-sn-glycero-3-phosphocholine + hexadecanoate + H(+). The catalysed reaction is 1-hexadecanoyl-2-nonadioyl-sn-glycero-3-phosphocholine + H2O = 2-nonadioyl-sn-glycero-3-phosphocholine + hexadecanoate + H(+). It carries out the reaction 1-hexadecanoyl-2-(5-oxopentanoyl)-sn-glycero-3-phosphocholine + H2O = 2-(5-oxopentanoyl)-sn-glycero-3-phosphocholine + hexadecanoate + H(+). It catalyses the reaction 1-hexadecanoyl-2-(9-oxononanoyl)-sn-glycero-3-phosphocholine + H2O = 2-(9-oxononanoyl)-sn-glycero-3-phosphocholine + hexadecanoate + H(+). The enzyme catalyses a 1,2-diacyl-sn-glycero-3-phosphocholine + H2O = a 1-acyl-sn-glycero-3-phosphocholine + a fatty acid + H(+). The catalysed reaction is 1,2-dihexadecanoyl-sn-glycero-3-phosphocholine + H2O = 1-hexadecanoyl-sn-glycero-3-phosphocholine + hexadecanoate + H(+). It carries out the reaction 1-hexadecanoyl-2-(9Z-octadecenoyl)-sn-glycero-3-phosphocholine + H2O = 1-hexadecanoyl-sn-glycero-3-phosphocholine + (9Z)-octadecenoate + H(+). It catalyses the reaction 1,2-di-(9Z-octadecenoyl)-sn-glycero-3-phosphocholine + H2O = 1-(9Z-octadecenoyl)-sn-glycero-3-phosphocholine + (9Z)-octadecenoate + H(+). The enzyme catalyses a 1-acyl-sn-glycero-3-phosphocholine + H2O = sn-glycerol 3-phosphocholine + a fatty acid + H(+). The catalysed reaction is 1-hexadecanoyl-sn-glycero-3-phosphocholine + H2O = sn-glycerol 3-phosphocholine + hexadecanoate + H(+). It carries out the reaction N-(acetyl)-sphing-4-enine + a 1,2-diacyl-sn-glycero-3-phosphoethanolamine = 1-O-acyl-N-(acetyl)-sphing-4-enine + a 2-acyl-sn-glycero-3-phosphoethanolamine. It catalyses the reaction 1-hexadecanoyl-2-(9Z-octadecenoyl)-sn-glycero-3-phosphoethanolamine + N-(acetyl)-sphing-4-enine = 2-(9Z-octadecenoyl)-sn-glycero-3-phosphoethanolamine + 1-hexadecanoyl-N-(acetyl)-sphing-4-enine. The enzyme catalyses 1-hexadecanoyl-2-(9Z,12Z-octadecadienoyl)-sn-glycero-3-phosphoethanolamine + N-(acetyl)-sphing-4-enine = 2-(9Z,12Z)-octadecadienoyl-sn-glycero-3-phosphoethanolamine + 1-hexadecanoyl-N-(acetyl)-sphing-4-enine. The catalysed reaction is 1-hexadecanoyl-2-(5Z,8Z,11Z,14Z-eicosatetraenoyl)-sn-glycero-3-phosphoethanolamine + N-(acetyl)-sphing-4-enine = 2-(5Z,8Z,11Z,14Z)-eicosatetraenoyl-sn-glycero-3-phosphoethanolamine + 1-hexadecanoyl-N-(acetyl)-sphing-4-enine. It carries out the reaction N-(acetyl)-sphing-4-enine + a 1,2-diacyl-sn-glycero-3-phosphoethanolamine = 1-O-acyl-N-(acetyl)-sphing-4-enine + a 1-acyl-sn-glycero-3-phosphoethanolamine. It catalyses the reaction 1-hexadecanoyl-2-(9Z-octadecenoyl)-sn-glycero-3-phosphoethanolamine + N-(acetyl)-sphing-4-enine = 1-(9Z-octadecenoyl)-N-(acetyl)-sphing-4-enine + 1-hexadecanoyl-sn-glycero-3-phosphoethanolamine. The enzyme catalyses 1-hexadecanoyl-2-(9Z,12Z-octadecadienoyl)-sn-glycero-3-phosphoethanolamine + N-(acetyl)-sphing-4-enine = 1-(9Z,12Z-octadecadienoyl)-N-acetylsphing-4-enine + 1-hexadecanoyl-sn-glycero-3-phosphoethanolamine. The catalysed reaction is 1-hexadecanoyl-2-(5Z,8Z,11Z,14Z-eicosatetraenoyl)-sn-glycero-3-phosphoethanolamine + N-(acetyl)-sphing-4-enine = 1-(5Z,8Z,11Z,14Z)-eicosatetraenoyl-N-(acetyl)-sphing-4-enine + 1-hexadecanoyl-sn-glycero-3-phosphoethanolamine. It carries out the reaction N-(acetyl)-sphing-4-enine + a 1,2-diacyl-sn-glycero-3-phosphocholine = 1-O-acyl-N-(acetyl)-sphing-4-enine + a 2-acyl-sn-glycero-3-phosphocholine. It catalyses the reaction 1-hexadecanoyl-2-(9Z-octadecenoyl)-sn-glycero-3-phosphocholine + N-(acetyl)-sphing-4-enine = 1-hexadecanoyl-N-(acetyl)-sphing-4-enine + 2-(9Z-octadecenoyl)-sn-glycero-3-phosphocholine. The enzyme catalyses 1-hexadecanoyl-2-(9Z,12Z-octadecadienoyl)-sn-glycero-3-phosphocholine + N-(acetyl)-sphing-4-enine = 2-(9Z,12Z-octadecadienoyl)-sn-glycero-3-phosphocholine + 1-hexadecanoyl-N-(acetyl)-sphing-4-enine. The catalysed reaction is 1-hexadecanoyl-2-(5Z,8Z,11Z,14Z-eicosatetraenoyl)-sn-glycero-3-phosphocholine + N-(acetyl)-sphing-4-enine = 1-hexadecanoyl-N-(acetyl)-sphing-4-enine + 2-(5Z,8Z,11Z,14Z)-eicosatetraenoyl-sn-glycero-3-phosphocholine. It carries out the reaction 1-hexadecanoyl-2-(4Z,7Z,10Z,13Z,16Z,19Z-docosahexaenoyl)-sn-glycero-3-phosphocholine + N-(acetyl)-sphing-4-enine = 2-(4Z,7Z,10Z,13Z,16Z,19Z-docosahexaenoyl)-sn-glycero-3-phosphocholine + 1-hexadecanoyl-N-(acetyl)-sphing-4-enine. It catalyses the reaction 1-hexadecanoyl-2-nonadioyl-sn-glycero-3-phosphocholine + N-(acetyl)-sphing-4-enine = 2-nonadioyl-sn-glycero-3-phosphocholine + 1-hexadecanoyl-N-(acetyl)-sphing-4-enine. The enzyme catalyses 1-octadecanoyl-2-(9Z-octadecenoyl)-sn-glycero-3-phosphocholine + N-(acetyl)-sphing-4-enine = 1-octadecanoyl-N-(acetyl)-sphing-4-enine + 2-(9Z-octadecenoyl)-sn-glycero-3-phosphocholine. The catalysed reaction is 1-(9Z)-octadecenoyl-2-octadecanoyl-sn-glycero-3-phosphocholine + N-(acetyl)-sphing-4-enine = 2-octadecanoyl-sn-glycero-3-phosphocholine + 1-(9Z-octadecenoyl)-N-(acetyl)-sphing-4-enine. It carries out the reaction 1-octadecanoyl-2-(5Z,8Z,11Z,14Z-eicosatetraenoyl)-sn-glycero-3-phosphocholine + N-(acetyl)-sphing-4-enine = 1-octadecanoyl-N-(acetyl)-sphing-4-enine + 2-(5Z,8Z,11Z,14Z)-eicosatetraenoyl-sn-glycero-3-phosphocholine. It catalyses the reaction 1-(9Z-octadecenoyl)-2-hexadecanoyl-sn-glycero-3-phosphocholine + N-(acetyl)-sphing-4-enine = 1-(9Z-octadecenoyl)-N-(acetyl)-sphing-4-enine + 2-hexadecanoyl-sn-glycero-3-phosphocholine. The enzyme catalyses N-(acetyl)-sphing-4-enine + a 1,2-diacyl-sn-glycero-3-phosphocholine = 1-O-acyl-N-(acetyl)-sphing-4-enine + a 1-acyl-sn-glycero-3-phosphocholine. The catalysed reaction is 1-hexadecanoyl-2-(9Z-octadecenoyl)-sn-glycero-3-phosphocholine + N-(acetyl)-sphing-4-enine = 1-(9Z-octadecenoyl)-N-(acetyl)-sphing-4-enine + 1-hexadecanoyl-sn-glycero-3-phosphocholine. It carries out the reaction 1-hexadecanoyl-2-(9Z,12Z-octadecadienoyl)-sn-glycero-3-phosphocholine + N-(acetyl)-sphing-4-enine = 1-(9Z,12Z-octadecadienoyl)-N-acetylsphing-4-enine + 1-hexadecanoyl-sn-glycero-3-phosphocholine. It catalyses the reaction 1-hexadecanoyl-2-(5Z,8Z,11Z,14Z-eicosatetraenoyl)-sn-glycero-3-phosphocholine + N-(acetyl)-sphing-4-enine = 1-(5Z,8Z,11Z,14Z)-eicosatetraenoyl-N-(acetyl)-sphing-4-enine + 1-hexadecanoyl-sn-glycero-3-phosphocholine. The enzyme catalyses 1-hexadecanoyl-2-(4Z,7Z,10Z,13Z,16Z,19Z-docosahexaenoyl)-sn-glycero-3-phosphocholine + N-(acetyl)-sphing-4-enine = 1-(4Z,7Z,10Z,13Z,16Z,19Z-docosahexaenoyl)-N-(acetyl)-sphing-4-enine + 1-hexadecanoyl-sn-glycero-3-phosphocholine. The catalysed reaction is 1-octadecanoyl-2-(9Z-octadecenoyl)-sn-glycero-3-phosphocholine + N-(acetyl)-sphing-4-enine = 1-(9Z-octadecenoyl)-N-(acetyl)-sphing-4-enine + 1-octadecanoyl-sn-glycero-3-phosphocholine. It carries out the reaction 1-octadecanoyl-2-(9Z,12Z)-octadecadienoyl-sn-glycero-3-phosphocholine + N-(acetyl)-sphing-4-enine = 1-(9Z,12Z-octadecadienoyl)-N-acetylsphing-4-enine + 1-octadecanoyl-sn-glycero-3-phosphocholine. It catalyses the reaction 1-(9Z-octadecenoyl)-2-hexadecanoyl-sn-glycero-3-phosphocholine + N-(acetyl)-sphing-4-enine = 1-hexadecanoyl-N-(acetyl)-sphing-4-enine + 1-(9Z-octadecenoyl)-sn-glycero-3-phosphocholine. The enzyme catalyses 1-(9Z)-octadecenoyl-2-octadecanoyl-sn-glycero-3-phosphocholine + N-(acetyl)-sphing-4-enine = 1-octadecanoyl-N-(acetyl)-sphing-4-enine + 1-(9Z-octadecenoyl)-sn-glycero-3-phosphocholine. The catalysed reaction is 1,2-di-(9Z-octadecenoyl)-sn-glycero-3-phosphocholine + N-(acetyl)-sphing-4-enine = 1-(9Z-octadecenoyl)-N-(acetyl)-sphing-4-enine + 1-(9Z-octadecenoyl)-sn-glycero-3-phosphocholine. It carries out the reaction 1-octadecanoyl-2-(5Z,8Z,11Z,14Z-eicosatetraenoyl)-sn-glycero-3-phosphocholine + N-(acetyl)-sphing-4-enine = 1-(5Z,8Z,11Z,14Z)-eicosatetraenoyl-N-(acetyl)-sphing-4-enine + 1-octadecanoyl-sn-glycero-3-phosphocholine. It catalyses the reaction a 1,2-diacyl-sn-glycero-3-phospho-L-serine + N-(acetyl)-sphing-4-enine = a 2-acyl-sn-glycero-3-phospho-L-serine + 1-O-acyl-N-(acetyl)-sphing-4-enine. The enzyme catalyses 1-octadecanoyl-2-(9Z-octadecenoyl)-sn-glycero-3-phospho-L-serine + N-(acetyl)-sphing-4-enine = 2-(9Z-octadecenoyl)-sn-glycero-3-phospho-L-serine + 1-octadecanoyl-N-(acetyl)-sphing-4-enine. The catalysed reaction is a 1,2-diacyl-sn-glycero-3-phospho-L-serine + N-(acetyl)-sphing-4-enine = 1-O-acyl-N-(acetyl)-sphing-4-enine + a 1-acyl-sn-glycero-3-phospho-L-serine. It carries out the reaction 1-octadecanoyl-2-(9Z-octadecenoyl)-sn-glycero-3-phospho-L-serine + N-(acetyl)-sphing-4-enine = 1-octadecanoyl-sn-glycero-3-phosphoserine + 1-(9Z-octadecenoyl)-N-(acetyl)-sphing-4-enine. It catalyses the reaction a 1,2-diacyl-sn-glycero-3-phospho-(1'-sn-glycerol) + N-(acetyl)-sphing-4-enine = 2-acyl-sn-glycero-3-phospho-(1'-sn-glycerol) + 1-O-acyl-N-(acetyl)-sphing-4-enine. The enzyme catalyses 1-octadecanoyl-2-(9Z-octadecenoyl)-sn-glycero-3-phospho-(1'-sn-glycerol) + N-(acetyl)-sphing-4-enine = 2-(9Z-octadecenoyl)-sn-glycero-3-phospho-(1'-sn-glycerol) + 1-octadecanoyl-N-(acetyl)-sphing-4-enine. The catalysed reaction is a 1,2-diacyl-sn-glycero-3-phospho-(1'-sn-glycerol) + N-(acetyl)-sphing-4-enine = 1-O-acyl-N-(acetyl)-sphing-4-enine + 1-acyl-sn-glycero-3-phospho-(1'-sn-glycerol). It carries out the reaction 1-octadecanoyl-2-(9Z-octadecenoyl)-sn-glycero-3-phospho-(1'-sn-glycerol) + N-(acetyl)-sphing-4-enine = 1-octadecanoyl-sn-glycero-3-phospho-(1'-sn-glycerol) + 1-(9Z-octadecenoyl)-N-(acetyl)-sphing-4-enine. It catalyses the reaction an N-acylethanolamine + a 1,2-diacyl-sn-glycero-3-phosphocholine = 2-(acylamino)ethyl fatty acid + a 2-acyl-sn-glycero-3-phosphocholine. The enzyme catalyses an N-acylethanolamine + a 1,2-diacyl-sn-glycero-3-phosphocholine = 2-(acylamino)ethyl fatty acid + a 1-acyl-sn-glycero-3-phosphocholine. The catalysed reaction is N-(5Z,8Z,11Z,14Z-eicosatetraenoyl)-ethanolamine + 1,2-di-(9Z-octadecenoyl)-sn-glycero-3-phosphocholine = 2-[(5Z,8Z,11Z,14Z)-eicosatetraenoylamino]ethyl (9Z)-octadecenoate + (9Z-octadecenoyl)-sn-glycero-3-phosphocholine. It carries out the reaction N-(9Z-octadecenoyl) ethanolamine + 1,2-di-(9Z-octadecenoyl)-sn-glycero-3-phosphocholine = 2-[(9Z)-octadecenoylamino]ethyl (9Z)-octadecenoate + (9Z-octadecenoyl)-sn-glycero-3-phosphocholine. It catalyses the reaction a 3-acyl-sn-glycerol + a 1,2-diacyl-sn-glycero-3-phosphocholine = a 1,3-diacylglycerol + a 1-acyl-sn-glycero-3-phosphocholine. The enzyme catalyses a 3-acyl-sn-glycerol + a 1,2-diacyl-sn-glycero-3-phosphocholine = a 1,3-diacylglycerol + a 2-acyl-sn-glycero-3-phosphocholine. The catalysed reaction is 3-(9Z-octadecenoyl)-sn-glycerol + 1,2-di-(9Z-octadecenoyl)-sn-glycero-3-phosphocholine = 1,3-di-(9Z-octadecenoyl)-glycerol + (9Z-octadecenoyl)-sn-glycero-3-phosphocholine. It carries out the reaction 3-hexadecanoyl-sn-glycerol + 1,2-di-(9Z-octadecenoyl)-sn-glycero-3-phosphocholine = 1-(9Z)-octadecenoyl-3-hexadecanoyl-sn-glycerol + (9Z-octadecenoyl)-sn-glycero-3-phosphocholine. It catalyses the reaction a 1-acyl-sn-glycerol + a 1,2-diacyl-sn-glycero-3-phosphocholine = a 1,3-diacylglycerol + a 2-acyl-sn-glycero-3-phosphocholine. The enzyme catalyses a 1-acyl-sn-glycerol + a 1,2-diacyl-sn-glycero-3-phosphocholine = a 1,3-diacylglycerol + a 1-acyl-sn-glycero-3-phosphocholine. The catalysed reaction is 1-(9Z-octadecenoyl)-sn-glycerol + 1,2-di-(9Z-octadecenoyl)-sn-glycero-3-phosphocholine = 1,3-di-(9Z-octadecenoyl)-glycerol + (9Z-octadecenoyl)-sn-glycero-3-phosphocholine. It carries out the reaction 1-hexadecanoyl-sn-glycerol + 1,2-di-(9Z-octadecenoyl)-sn-glycero-3-phosphocholine = 1-hexadecanoyl-3-(9Z)-octadecenoyl-sn-glycerol + (9Z-octadecenoyl)-sn-glycero-3-phosphocholine. It catalyses the reaction a 2-acylglycerol + a 1,2-diacyl-sn-glycero-3-phosphocholine = a 1,2-diacylglycerol + a 2-acyl-sn-glycero-3-phosphocholine. The enzyme catalyses a 2-acylglycerol + a 1,2-diacyl-sn-glycero-3-phosphocholine = a 1,2-diacylglycerol + a 1-acyl-sn-glycero-3-phosphocholine. The catalysed reaction is 2-hexadecanoylglycerol + 1,2-di-(9Z-octadecenoyl)-sn-glycero-3-phosphocholine = 1-(9Z)-octadecenoyl-2-hexadecanoylglycerol + (9Z-octadecenoyl)-sn-glycero-3-phosphocholine. It carries out the reaction 1-O-alkylglycerol + a 1,2-diacyl-sn-glycero-3-phosphocholine = 1-O-alkyl-3-acylglycerol + a 1-acyl-sn-glycero-3-phosphocholine. It catalyses the reaction 1-O-alkylglycerol + a 1,2-diacyl-sn-glycero-3-phosphocholine = 1-O-alkyl-3-acylglycerol + a 2-acyl-sn-glycero-3-phosphocholine. The enzyme catalyses 1-O-hexadecylglycerol + 1,2-di-(9Z-octadecenoyl)-sn-glycero-3-phosphocholine = 1-O-hexadecyl-3-(9Z)-octadecenoylglycerol + (9Z-octadecenoyl)-sn-glycero-3-phosphocholine. The catalysed reaction is 1-O-alkyl-2-acyl-sn-glycerol + a 1,2-diacyl-sn-glycero-3-phosphocholine = 1-O-alkyl-2,3-diacyl-sn-glycerol + a 2-acyl-sn-glycero-3-phosphocholine. It carries out the reaction 1-O-alkyl-2-acyl-sn-glycerol + a 1,2-diacyl-sn-glycero-3-phosphocholine = 1-O-alkyl-2,3-diacyl-sn-glycerol + a 1-acyl-sn-glycero-3-phosphocholine. It catalyses the reaction 1-O-hexadecyl-2-acetyl-sn-glycerol + 1,2-di-(9Z-octadecenoyl)-sn-glycero-3-phosphocholine = 1-O-hexadecyl-2-acetyl-3-(9Z)-octadecenoyl-sn-glycerol + (9Z-octadecenoyl)-sn-glycero-3-phosphocholine. The enzyme catalyses 1-O-hexadecyl-2-O-methyl-sn-glycerol + 1,2-di-(9Z-octadecenoyl)-sn-glycero-3-phosphocholine = 1-O-hexadecyl-2-O-methyl-3-(9Z)-octadecenoyl-sn-glycerol + (9Z-octadecenoyl)-sn-glycero-3-phosphocholine. The catalysed reaction is a 1,2-diacyl-sn-glycero-3-phosphoethanolamine + H2O = a 1-acyl-sn-glycero-3-phosphoethanolamine + a fatty acid + H(+). It carries out the reaction 1-acyl-2-(5Z,8Z,11Z,14Z)-eicosatetraenoyl-sn-glycero-3-phosphoethanolamine + H2O = a 1-acyl-sn-glycero-3-phosphoethanolamine + (5Z,8Z,11Z,14Z)-eicosatetraenoate + H(+). It catalyses the reaction a 1,2-diacyl-sn-glycero-3-phospho-(1'-sn-glycerol) + H2O = 1-acyl-sn-glycero-3-phospho-(1'-sn-glycerol) + a fatty acid + H(+). The enzyme catalyses 1-hexadecanoyl-2-(9Z-octadecenoyl)-sn-glycero-3-phospho-(1'-sn-glycerol) + H2O = 1-hexadecanoyl-sn-glycero-3-phospho-(1'-sn-glycerol) + (9Z)-octadecenoate + H(+). The catalysed reaction is a 1,2-diacyl-sn-glycero-3-phospho-(1'-sn-glycerol) + H2O = 2-acyl-sn-glycero-3-phospho-(1'-sn-glycerol) + a fatty acid + H(+). It carries out the reaction 1-hexadecanoyl-2-(9Z-octadecenoyl)-sn-glycero-3-phospho-(1'-sn-glycerol) + H2O = 2-(9Z-octadecenoyl)-sn-glycero-3-phospho-(1'-sn-glycerol) + hexadecanoate + H(+). Transacylase activity is inhibited by MJ33. Functionally, has dual calcium-independent phospholipase and O-acyltransferase activities with a potential role in glycerophospholipid homeostasis and remodeling of acyl groups of lipophilic alcohols present in acidic cellular compartments. Catalyzes hydrolysis of the ester bond of the fatty acyl group attached at sn-1 or sn-2 position of phospholipids (phospholipase A1 or A2 activity) and transfer it to the hydroxyl group at the first carbon of lipophilic alcohols (O-acyltransferase activity). Among preferred fatty acyl donors are phosphatidylcholines, phosphatidylethanolamines, phosphatidylglycerols and phosphatidylserines. Favors sn-2 over sn-1 deacylation of unsaturated fatty acyl groups of phosphatidylcholines, phosphatidylethanolamines, and phosphatidylglycerols. Among preferred fatty acyl acceptors are natural lipophilic alcohols including short-chain ceramide N-acetyl-sphingosine (C2 ceramide), alkylacylglycerols, monoacylglycerols, and acylethanolamides such as anandamide and oleoylethanolamide. Selectively hydrolyzes the sn-1 fatty acyl group of truncated oxidized phospholipids and may play a role in detoxification of reactive oxidized phospholipids during oxidative stress. Required for normal phospholipid degradation in alveolar macrophages with potential implications in the clearance of pulmonary surfactant, which is mainly composed of dipalmitoylphosphatidylcholine (1,2-dihexadecanoyl-sn-glycero-3-phosphocholine). Involved in the first step of bis(monoacylglycero)phosphate (BMP) de novo synthesis from phosphatidylglycerol (1,2-diacyl-sn-glycero-3-phospho-(1'-sn-glycerol), PG). BMP is an important player in cargo sorting and degradation, regulation of cellular cholesterol levels and intercellular communication. At neutral pH, hydrolyzes the sn-1 fatty acyl group of the lysophosphatidylcholines. In Rattus norvegicus (Rat), this protein is Lysosomal phospholipase A and acyltransferase (Pla2g15).